Reading from the N-terminus, the 464-residue chain is Chitobiosyldiphosphodolichol beta-mannosyltransferase (464 aa).

Residues 1-2 lie on the Lumenal side of the membrane; it reads MA. The chain crosses the membrane as a helical span at residues 3–23; that stretch reads ASCLVLLALCLLLPLLLLGGW. The Cytoplasmic portion of the chain corresponds to 24 to 99; it reads KRWRRGRAAR…ELQSLAVGPR (76 aa). Residues 100 to 120 constitute an intramembrane region (helical); it reads VFQYGVKVVLQAMYLLWKLMW. At 121 to 464 the chain is on the cytoplasmic side; the sequence is REPGAYIFLQ…QTVLPLVMDT (344 aa). The residue at position 242 (serine 242) is a Phosphoserine. The interval 243–262 is disordered; the sequence is PFRARSEPEDPVTERSAFTE.

It belongs to the glycosyltransferase group 1 family. Glycosyltransferase 33 subfamily.

The protein localises to the endoplasmic reticulum membrane. It catalyses the reaction an N,N'-diacetylchitobiosyl-diphospho-di-trans,poly-cis-dolichol + GDP-alpha-D-mannose = a beta-D-Man-(1-&gt;4)-beta-D-GlcNAc-(1-&gt;4)-alpha-D-GlcNAc-diphospho-di-trans,poly-cis-dolichol + GDP + H(+). It participates in protein modification; protein glycosylation. Its function is as follows. Mannosyltransferase that operates in the biosynthetic pathway of dolichol-linked oligosaccharides, the glycan precursors employed in protein asparagine (N)-glycosylation. The assembly of dolichol-linked oligosaccharides begins on the cytosolic side of the endoplasmic reticulum membrane and finishes in its lumen. The sequential addition of sugars to dolichol pyrophosphate produces dolichol-linked oligosaccharides containing fourteen sugars, including two GlcNAcs, nine mannoses and three glucoses. Once assembled, the oligosaccharide is transferred from the lipid to nascent proteins by oligosaccharyltransferases. Catalyzes, on the cytoplasmic face of the endoplasmic reticulum, the addition of the first mannose residues to the dolichol-linked oligosaccharide chain, to produce Man1GlcNAc(2)-PP-dolichol core oligosaccharide. Man1GlcNAc(2)-PP-dolichol is a substrate for ALG2, the following enzyme in the biosynthetic pathway. The protein is Chitobiosyldiphosphodolichol beta-mannosyltransferase of Homo sapiens (Human).